A 189-amino-acid chain; its full sequence is Putative manganese efflux pump MntP (189 aa).

The next 6 helical transmembrane spans lie at 8–28 (FLSL…GFSI), 39–59 (IALF…SAGL), 65–85 (ISSF…GKMI), 106–126 (LTTL…GLSV), 131–151 (ILLA…IGVF), and 166–186 (IVGG…HLGF).

It belongs to the MntP (TC 9.B.29) family.

It localises to the cell inner membrane. Functionally, probably functions as a manganese efflux pump. The chain is Putative manganese efflux pump MntP from Gloeothece citriformis (strain PCC 7424) (Cyanothece sp. (strain PCC 7424)).